The sequence spans 416 residues: Geranyl diphosphate synthase (416 aa).

D157 and D161 together coordinate Mg(2+). A DDXXD motif motif is present at residues D157–D161.

This sequence belongs to the FPP/GGPP synthase family. The cofactor is Mg(2+). Specifically expressed in the anterior midgut of male beetles, the site of aggregation pheromone biosynthesis.

The enzyme catalyses isopentenyl diphosphate + dimethylallyl diphosphate = (2E)-geranyl diphosphate + diphosphate. The protein operates within pheromone biosynthesis. Geranyl diphosphate synthase involved in pheromone biosynthesis. The chain is Geranyl diphosphate synthase from Ips pini (Pine engraver beetle).